Reading from the N-terminus, the 415-residue chain is Homoserine O-succinyltransferase (415 aa).

Residues 1 to 26 (MTSPALTAASVTPSRNTTSPDTTSHR) are compositionally biased toward polar residues. A disordered region spans residues 1–27 (MTSPALTAASVTPSRNTTSPDTTSHRP). The region spanning 71–386 (NAVLICHALN…HGHDAFLLED (316 aa)) is the AB hydrolase-1 domain. The active-site Nucleophile is Ser177. Residue Arg247 participates in substrate binding. Residues Asp346 and His379 contribute to the active site. Asp380 serves as a coordination point for substrate.

Belongs to the AB hydrolase superfamily. MetX family. Homodimer.

It is found in the cytoplasm. It carries out the reaction L-homoserine + succinyl-CoA = O-succinyl-L-homoserine + CoA. Its pathway is amino-acid biosynthesis; L-methionine biosynthesis via de novo pathway; O-succinyl-L-homoserine from L-homoserine: step 1/1. Functionally, transfers a succinyl group from succinyl-CoA to L-homoserine, forming succinyl-L-homoserine. This chain is Homoserine O-succinyltransferase, found in Bordetella avium (strain 197N).